We begin with the raw amino-acid sequence, 102 residues long: Small ribosomal subunit protein uS10 (102 aa).

The protein belongs to the universal ribosomal protein uS10 family. In terms of assembly, part of the 30S ribosomal subunit.

Functionally, involved in the binding of tRNA to the ribosomes. This is Small ribosomal subunit protein uS10 from Heliobacterium modesticaldum (strain ATCC 51547 / Ice1).